The following is a 547-amino-acid chain: Glucose-6-phosphate isomerase 2 (547 aa).

Residue Glu351 is the Proton donor of the active site. Active-site residues include His382 and Lys508.

Belongs to the GPI family.

It localises to the cytoplasm. The enzyme catalyses alpha-D-glucose 6-phosphate = beta-D-fructose 6-phosphate. It functions in the pathway carbohydrate biosynthesis; gluconeogenesis. Its pathway is carbohydrate degradation; glycolysis; D-glyceraldehyde 3-phosphate and glycerone phosphate from D-glucose: step 2/4. Its function is as follows. Catalyzes the reversible isomerization of glucose-6-phosphate to fructose-6-phosphate. This Neisseria meningitidis serogroup A / serotype 4A (strain DSM 15465 / Z2491) protein is Glucose-6-phosphate isomerase 2.